The following is a 158-amino-acid chain: UPF0329 protein ECU06_0050 (158 aa).

This sequence belongs to the UPF0329 family.

This chain is UPF0329 protein ECU06_0050, found in Encephalitozoon cuniculi (strain GB-M1) (Microsporidian parasite).